The sequence spans 125 residues: UPF0251 protein DSY3441 (125 aa).

This sequence belongs to the UPF0251 family.

This chain is UPF0251 protein DSY3441, found in Desulfitobacterium hafniense (strain Y51).